We begin with the raw amino-acid sequence, 705 residues long: Polyribonucleotide nucleotidyltransferase (705 aa).

Residues aspartate 492 and aspartate 498 each coordinate Mg(2+). Residues proline 559 to isoleucine 618 enclose the KH domain. An S1 motif domain is found at glycine 628–lysine 696.

Belongs to the polyribonucleotide nucleotidyltransferase family. Requires Mg(2+) as cofactor.

It is found in the cytoplasm. It carries out the reaction RNA(n+1) + phosphate = RNA(n) + a ribonucleoside 5'-diphosphate. Functionally, involved in mRNA degradation. Catalyzes the phosphorolysis of single-stranded polyribonucleotides processively in the 3'- to 5'-direction. This is Polyribonucleotide nucleotidyltransferase from Halothermothrix orenii (strain H 168 / OCM 544 / DSM 9562).